Reading from the N-terminus, the 1218-residue chain is Protein jagged-1 (1218 aa).

The signal sequence occupies residues 1 to 33 (MRSPRTRGRSGRPLSLLLALLCALRAKVCGASG). Over 34–1067 (QFELEILSMQ…QRRPLKNRTD (1034 aa)) the chain is Extracellular. N-linked (GlcNAc...) asparagine glycosylation occurs at Asn-143. The DSL domain occupies 185–229 (VTCDDYYYGFGCNKFCRPRDDFFGHYACDQNGNKTCMEGWMGPEC). 2 disulfides stabilise this stretch: Cys-187–Cys-196 and Cys-200–Cys-212. The important for interaction with NOTCH1 stretch occupies residues 199–207 (FCRPRDDFF). N-linked (GlcNAc...) asparagine glycosylation is present at Asn-217. 40 cysteine pairs are disulfide-bonded: Cys-220–Cys-229, Cys-234–Cys-245, Cys-238–Cys-251, Cys-253–Cys-262, Cys-265–Cys-276, Cys-271–Cys-282, Cys-284–Cys-293, Cys-300–Cys-312, Cys-306–Cys-322, Cys-324–Cys-333, Cys-340–Cys-351, Cys-345–Cys-360, Cys-362–Cys-371, Cys-378–Cys-389, Cys-383–Cys-398, Cys-400–Cys-409, Cys-416–Cys-427, Cys-421–Cys-436, Cys-438–Cys-447, Cys-454–Cys-464, Cys-458–Cys-473, Cys-475–Cys-484, Cys-491–Cys-502, Cys-496–Cys-511, Cys-513–Cys-522, Cys-529–Cys-540, Cys-534–Cys-549, Cys-551–Cys-560, Cys-578–Cys-605, Cys-599–Cys-615, Cys-617–Cys-626, Cys-633–Cys-644, Cys-638–Cys-653, Cys-655–Cys-664, Cys-671–Cys-682, Cys-676–Cys-691, Cys-693–Cys-702, Cys-709–Cys-720, Cys-714–Cys-729, and Cys-731–Cys-740. One can recognise an EGF-like 1 domain in the interval 230-263 (NRAICRQGCSPKHGSCKLPGDCRCQYGWQGLYCD). In terms of domain architecture, EGF-like 2; atypical spans 264–294 (KCIPHPGCVHGICNEPWQCLCETNWGGQLCD). EGF-like domains lie at 296-334 (DLNY…PNCE) and 336-372 (AEHA…PTCS). One can recognise an EGF-like 5; calcium-binding domain in the interval 374–410 (NIDDCSPNNCSHGGTCQDLVNGFKCVCPPQWTGKTCQ). A glycan (N-linked (GlcNAc...) asparagine) is linked at Asn-382. In terms of domain architecture, EGF-like 6; calcium-binding spans 412–448 (DANECEAKPCVNAKSCKNLIASYYCDCLPGWMGQNCD). An EGF-like 7; calcium-binding domain is found at 450-485 (NINDCLGQCQNDASCRDLVNGYRCICPPGYAGDHCE). Positions 487 to 523 (DIDECASNPCLNGGHCQNEINRFQCLCPTGFSGNLCQ) constitute an EGF-like 8; calcium-binding domain. 2 EGF-like domains span residues 525 to 561 (DIDY…KNCS) and 586 to 627 (DTPE…TYCH). The N-linked (GlcNAc...) asparagine glycan is linked to Asn-559. Residues 629–665 (NINDCESNPCRNGGTCIDGVNSYKCICSDGWEGAYCE) enclose the EGF-like 11; calcium-binding domain. An EGF-like 12; calcium-binding domain is found at 667–703 (NINDCSQNPCHNGGTCRDLVNDFYCDCKNGWKGKTCH). 2 consecutive EGF-like domains span residues 705-741 (RDSQ…TTCN) and 744-780 (RNSS…PICA). N-linked (GlcNAc...) asparagine glycosylation occurs at Asn-745. 9 disulfides stabilise this stretch: Cys-748–Cys-759, Cys-753–Cys-768, Cys-770–Cys-779, Cys-786–Cys-797, Cys-791–Cys-806, Cys-808–Cys-817, Cys-824–Cys-835, Cys-829–Cys-844, and Cys-846–Cys-855. Positions 782-818 (NTNDCSPHPCYNSGTCVDGDNWYRCECAPGFAGPDCR) constitute an EGF-like 15; calcium-binding domain. One can recognise an EGF-like 16; calcium-binding domain in the interval 820–856 (NINECQSSPCAFGATCVDEINGYRCVCPPGHSGAKCQ). Residues Asn-960, Asn-991, Asn-1045, and Asn-1064 are each glycosylated (N-linked (GlcNAc...) asparagine). Residues 1068–1093 (FLVPLLSSVLTVAWICCLVTAFYWCL) form a helical membrane-spanning segment. Residues 1094–1218 (RKRRKPGSHT…QSLNRMEYIV (125 aa)) are Cytoplasmic-facing. The interval 1152–1218 (HNSEVEEDDM…QSLNRMEYIV (67 aa)) is disordered. Polar residues predominate over residues 1189 to 1199 (TPTKHPNWTNK).

In terms of assembly, interacts with NOTCH2 and NOTCH3. Interacts with NOTCH1 (in the presence of calcium ions). Widely expressed in adult and fetal tissues. In cervix epithelium expressed in undifferentiated subcolumnar reserve cells and squamous metaplasia. Expression is up-regulated in cervical squamous cell carcinoma. Expressed in bone marrow cell line HS-27a which supports the long-term maintenance of immature progenitor cells.

It is found in the membrane. The protein resides in the cell membrane. Ligand for multiple Notch receptors and involved in the mediation of Notch signaling. May be involved in cell-fate decisions during hematopoiesis. Seems to be involved in early and late stages of mammalian cardiovascular development. Inhibits myoblast differentiation. Enhances fibroblast growth factor-induced angiogenesis (in vitro). This chain is Protein jagged-1 (JAG1), found in Homo sapiens (Human).